Here is a 494-residue protein sequence, read N- to C-terminus: Maintenance of mitochondrial morphology protein 1 (494 aa).

Topologically, residues 1-25 are lumenal; it reads MGDDQSLRSTVAENDISANLSFTQG. The chain crosses the membrane as a helical span at residues 26-46; that stretch reads FLLGQLSVVLLIGAFIKFFIF. Residues 47 to 494 lie on the Cytoplasmic side of the membrane; that stretch reads GEAPPPPSRG…GTLPGGAAAN (448 aa). 3 disordered regions span residues 53-99, 278-330, and 395-494; these read PSRG…VPSS, PPLH…KSNV, and RTGV…AAAN. Positions 57–67 are enriched in basic residues; that stretch reads LSHRASTHRRS. 2 stretches are compositionally biased toward polar residues: residues 68 to 81 and 88 to 99; these read NSIYTINPNEGTSR and STSNVLRPVPSS. The region spanning 134–387 is the SMP-LTD domain; that stretch reads QPESLDWFNV…EPRVQVVGLP (254 aa). Residues 278–290 show a composition bias toward pro residues; the sequence is PPLHTPSPSPSPP. Composition is skewed to polar residues over residues 300 to 318 and 406 to 415; these read THPTNGSREPTQEAPNAQE and TGSNAASRSA. The segment covering 425–437 has biased composition (basic and acidic residues); that stretch reads RADDIGREPDGLR.

It belongs to the MMM1 family. In terms of assembly, homodimer. Component of the ER-mitochondria encounter structure (ERMES) or MDM complex, composed of mmm1, mdm10, mdm12 and mdm34. A mmm1 homodimer associates with one molecule of mdm12 on each side in a pairwise head-to-tail manner, and the SMP-LTD domains of mmm1 and mdm12 generate a continuous hydrophobic tunnel for phospholipid trafficking.

The protein resides in the endoplasmic reticulum membrane. Component of the ERMES/MDM complex, which serves as a molecular tether to connect the endoplasmic reticulum (ER) and mitochondria. Components of this complex are involved in the control of mitochondrial shape and protein biogenesis, and function in nonvesicular lipid trafficking between the ER and mitochondria. The mdm12-mmm1 subcomplex functions in the major beta-barrel assembly pathway that is responsible for biogenesis of all outer membrane beta-barrel proteins, and acts in a late step after the SAM complex. The mdm10-mdm12-mmm1 subcomplex further acts in the TOM40-specific pathway after the action of the mdm12-mmm1 complex. Essential for establishing and maintaining the structure of mitochondria and maintenance of mtDNA nucleoids. The chain is Maintenance of mitochondrial morphology protein 1 from Aspergillus oryzae (strain ATCC 42149 / RIB 40) (Yellow koji mold).